The sequence spans 449 residues: UDP-N-acetylmuramate--L-alanine ligase (449 aa).

Position 110 to 116 (Gly110 to Thr116) interacts with ATP.

Belongs to the MurCDEF family.

Its subcellular location is the cytoplasm. It catalyses the reaction UDP-N-acetyl-alpha-D-muramate + L-alanine + ATP = UDP-N-acetyl-alpha-D-muramoyl-L-alanine + ADP + phosphate + H(+). The protein operates within cell wall biogenesis; peptidoglycan biosynthesis. Its function is as follows. Cell wall formation. This Desulfitobacterium hafniense (strain Y51) protein is UDP-N-acetylmuramate--L-alanine ligase.